We begin with the raw amino-acid sequence, 548 residues long: Glucan 1,4-alpha-maltotetraohydrolase (548 aa).

An N-terminal signal peptide occupies residues 1–21; that stretch reads MSHILRAAVLAAMLLPLPSMA. The Ca(2+) site is built by D22, Q23, H34, D37, and E38. A substrate-binding site is contributed by 99-100; it reads YF. Position 137 (N137) interacts with Ca(2+). H138 serves as a coordination point for substrate. An intrachain disulfide couples C161 to C171. Positions 172 and 175 each coordinate Ca(2+). Substrate is bound at residue 177–181; the sequence is FIGGD. D183 lines the Ca(2+) pocket. R212 provides a ligand contact to substrate. D214 acts as the Nucleophile in catalysis. Residue 217-218 participates in substrate binding; that stretch reads RG. A Ca(2+)-binding site is contributed by G218. The cysteines at positions 237 and 272 are disulfide-linked. Residue E240 is the Proton donor of the active site. Substrate contacts are provided by H314 and Q326. The CBM20 domain occupies 446 to 548; the sequence is GEPGALVSVS…SEGATTVGRL (103 aa). The segment covering 529-542 has biased composition (polar residues); sequence QGGANNSLTPSEGA. Residues 529-548 form a disordered region; it reads QGGANNSLTPSEGATTVGRL.

It belongs to the glycosyl hydrolase 13 family. Monomer. Ca(2+) is required as a cofactor.

It is found in the secreted. The catalysed reaction is Hydrolysis of (1-&gt;4)-alpha-D-glucosidic linkages in amylaceous polysaccharides, to remove successive maltotetraose residues from the non-reducing chain ends.. It functions in the pathway glycan degradation; starch degradation. This is Glucan 1,4-alpha-maltotetraohydrolase (amyP) from Stutzerimonas stutzeri (Pseudomonas stutzeri).